Reading from the N-terminus, the 323-residue chain is Ribosomal RNA small subunit methyltransferase H (323 aa).

S-adenosyl-L-methionine-binding positions include 44 to 46 (AGH), Asp-64, Tyr-91, Asp-112, and Gln-119.

Belongs to the methyltransferase superfamily. RsmH family.

It is found in the cytoplasm. It catalyses the reaction cytidine(1402) in 16S rRNA + S-adenosyl-L-methionine = N(4)-methylcytidine(1402) in 16S rRNA + S-adenosyl-L-homocysteine + H(+). Specifically methylates the N4 position of cytidine in position 1402 (C1402) of 16S rRNA. The polypeptide is Ribosomal RNA small subunit methyltransferase H (Nitratidesulfovibrio vulgaris (strain ATCC 29579 / DSM 644 / CCUG 34227 / NCIMB 8303 / VKM B-1760 / Hildenborough) (Desulfovibrio vulgaris)).